A 327-amino-acid polypeptide reads, in one-letter code: Protoheme IX farnesyltransferase (327 aa).

8 consecutive transmembrane segments (helical) span residues 35 to 55 (LIPL…GWPL), 60 to 80 (LVCT…LNCL), 106 to 126 (SAFI…VSGV), 129 to 149 (LAAG…TALL), 157 to 177 (IVIG…AATG), 185 to 205 (WLFA…ALLL), 234 to 254 (GWIT…GGAF), and 283 to 303 (AKAL…LLIL).

It belongs to the UbiA prenyltransferase family. Protoheme IX farnesyltransferase subfamily.

The protein resides in the cell inner membrane. It carries out the reaction heme b + (2E,6E)-farnesyl diphosphate + H2O = Fe(II)-heme o + diphosphate. It participates in porphyrin-containing compound metabolism; heme O biosynthesis; heme O from protoheme: step 1/1. Functionally, converts heme B (protoheme IX) to heme O by substitution of the vinyl group on carbon 2 of heme B porphyrin ring with a hydroxyethyl farnesyl side group. In Synechococcus sp. (strain CC9605), this protein is Protoheme IX farnesyltransferase.